The sequence spans 179 residues: UPF0227 protein Shewana3_2292 (179 aa).

This sequence belongs to the UPF0227 family.

The polypeptide is UPF0227 protein Shewana3_2292 (Shewanella sp. (strain ANA-3)).